We begin with the raw amino-acid sequence, 261 residues long: Acyl-[acyl-carrier-protein]--UDP-N-acetylglucosamine O-acyltransferase (261 aa).

Belongs to the transferase hexapeptide repeat family. LpxA subfamily. As to quaternary structure, homotrimer.

It is found in the cytoplasm. It catalyses the reaction a (3R)-hydroxyacyl-[ACP] + UDP-N-acetyl-alpha-D-glucosamine = a UDP-3-O-[(3R)-3-hydroxyacyl]-N-acetyl-alpha-D-glucosamine + holo-[ACP]. It functions in the pathway glycolipid biosynthesis; lipid IV(A) biosynthesis; lipid IV(A) from (3R)-3-hydroxytetradecanoyl-[acyl-carrier-protein] and UDP-N-acetyl-alpha-D-glucosamine: step 1/6. Involved in the biosynthesis of lipid A, a phosphorylated glycolipid that anchors the lipopolysaccharide to the outer membrane of the cell. The chain is Acyl-[acyl-carrier-protein]--UDP-N-acetylglucosamine O-acyltransferase from Trichlorobacter lovleyi (strain ATCC BAA-1151 / DSM 17278 / SZ) (Geobacter lovleyi).